Here is a 420-residue protein sequence, read N- to C-terminus: Argininosuccinate synthase (420 aa).

Residue 11–19 (AFSGGLDTT) coordinates ATP. Y88 contacts L-citrulline. G118 contacts ATP. 3 residues coordinate L-aspartate: T120, N124, and D125. Residue N124 coordinates L-citrulline. Residues R128, S174, S183, E257, and Y269 each contribute to the L-citrulline site. The disordered stretch occupies residues 401–420 (KGAAVTDGSGDHAASEDTEE). Basic and acidic residues predominate over residues 409 to 420 (SGDHAASEDTEE).

Belongs to the argininosuccinate synthase family. Type 1 subfamily. As to quaternary structure, homotetramer.

The protein resides in the cytoplasm. The catalysed reaction is L-citrulline + L-aspartate + ATP = 2-(N(omega)-L-arginino)succinate + AMP + diphosphate + H(+). Its pathway is amino-acid biosynthesis; L-arginine biosynthesis; L-arginine from L-ornithine and carbamoyl phosphate: step 2/3. The chain is Argininosuccinate synthase from Haloarcula marismortui (strain ATCC 43049 / DSM 3752 / JCM 8966 / VKM B-1809) (Halobacterium marismortui).